Here is a 204-residue protein sequence, read N- to C-terminus: Peptidyl-tRNA hydrolase (204 aa).

Tyrosine 19 provides a ligand contact to tRNA. The active-site Proton acceptor is histidine 24. Positions 70, 72, and 118 each coordinate tRNA.

Belongs to the PTH family. As to quaternary structure, monomer.

The protein localises to the cytoplasm. The catalysed reaction is an N-acyl-L-alpha-aminoacyl-tRNA + H2O = an N-acyl-L-amino acid + a tRNA + H(+). In terms of biological role, hydrolyzes ribosome-free peptidyl-tRNAs (with 1 or more amino acids incorporated), which drop off the ribosome during protein synthesis, or as a result of ribosome stalling. Its function is as follows. Catalyzes the release of premature peptidyl moieties from peptidyl-tRNA molecules trapped in stalled 50S ribosomal subunits, and thus maintains levels of free tRNAs and 50S ribosomes. This Prochlorococcus marinus (strain SARG / CCMP1375 / SS120) protein is Peptidyl-tRNA hydrolase.